We begin with the raw amino-acid sequence, 263 residues long: TPR repeat-containing protein DDB_G0285095 (263 aa).

The segment covering 1 to 25 has biased composition (basic and acidic residues); it reads MGCCGSKEKYNGEDVPKSQRLENRP. A disordered region spans residues 1 to 62; the sequence is MGCCGSKEKY…ASASQQNNPT (62 aa). TPR repeat units lie at residues 87-120, 121-154, and 162-195; these read SDLLAQYGVLLSMEGKNKEAEESLRKAVEVDTDN, SRAWQAYGEFLERTNNPKKAKEVYGEAYKHAAPK, and SSLLLSYAIFIQKSGEIDKAEKLYKRIVTSGARS.

The polypeptide is TPR repeat-containing protein DDB_G0285095 (Dictyostelium discoideum (Social amoeba)).